Here is a 685-residue protein sequence, read N- to C-terminus: Sodium/glucose cotransporter 4 (685 aa).

The segment at 1 to 20 (MNTELVAMEPGVSRNGVRTE) is disordered. At 1–32 (MNTELVAMEPGVSRNGVRTETTTNPSLGLHTY) the chain is on the extracellular side. A helical membrane pass occupies residues 33–53 (DIVVVVIYFVFVLAVGIWSSI). Topologically, residues 54-71 (RASRGTVGGYFLAGRSMT) are cytoplasmic. Residues 72-94 (WWPIGASLMSSNVGSGLFIGLAG) form a helical membrane-spanning segment. Over 95-110 (TGAAGGLAVGGFEWNA) the chain is Extracellular. Residues 111–131 (TFLLLALGWIFVPVYIAAGVV) form a helical membrane-spanning segment. Over 132 to 153 (TMPQYLKKRFGGQRIQVYMSVL) the chain is Cytoplasmic. Residues 154-174 (SLILYIFTKISTDIFSGALFI) form a helical membrane-spanning segment. Residues 175–186 (QMALGWNLYLST) are Extracellular-facing. A helical membrane pass occupies residues 187-207 (VILLVVTAVYTIAGGLTAVIY). Residues 208–213 (TDALQT) are Cytoplasmic-facing. A helical membrane pass occupies residues 214 to 234 (VIMVGGALVLMFLGFQEVGWY). Over 235–271 (PGLQQLYRQAIPNTTVPNTTCHLPRPDAFHMLRDPVN) the chain is Extracellular. Residue N247 is glycosylated (N-linked (GlcNAc...) asparagine). Residues 272–292 (GDIPWPGLIFGLTVLATWCWC) form a helical membrane-spanning segment. The Cytoplasmic segment spans residues 293–313 (TDQVIVQRSLAAKNLSHAKGG). Residues 314 to 334 (SVLGGYLKILPMFFIVMPGMI) form a helical membrane-spanning segment. The Extracellular portion of the chain corresponds to 335–379 (SRALYPDEVACVDPDICQRVCGARVGCSNIAYPKLVMALMPVGLR). A helical transmembrane segment spans residues 380-402 (GLMIAVIMAALMSSLTSIFNSSS). The Cytoplasmic portion of the chain corresponds to 403-423 (TLFAIDVWQRFRRQASEQELM). Residues 424–444 (VVGRLFVVFLVVISILWIPII) traverse the membrane as a helical segment. Over 445 to 455 (QSSNSGQLFDY) the chain is Extracellular. Residues 456 to 476 (IQSITSYLAPPITALFLLAIF) form a helical membrane-spanning segment. At 477-483 (CKRVNEP) the chain is on the cytoplasmic side. The chain crosses the membrane as a helical span at residues 484–504 (GAFWGLMFGLVVGILRMILEF). Residues 505–526 (SYSAPACGEMDRRPAVLKDFHY) are Extracellular-facing. Residues 527–547 (LYFALLLCGLTAIIIVVISFF) form a helical membrane-spanning segment. Residues 548–664 (TEPIPDDKLA…SIEEEPLWRR (117 aa)) are Cytoplasmic-facing. Positions 577–616 (VSVNNTEDDNSPGLAGRPVVEGPAGDEEEANTTQGPEQPG) are disordered. A helical membrane pass occupies residues 665–685 (VCNINAIILLAINIFLWGYFA).

This sequence belongs to the sodium:solute symporter (SSF) (TC 2.A.21) family.

The protein localises to the cell membrane. It catalyses the reaction D-mannose(out) + n Na(+)(out) = D-mannose(in) + n Na(+)(in). Its function is as follows. Electrogenic Na(+)-coupled sugar symporter that may play a primary role in D-mannose and possibly D-fructose and D-glucose transport at the plasma membrane. Transporter activity is driven by a transmembrane Na(+) electrochemical gradient set by the Na(+)/K(+) pump. Exclusively recognizes sugar substrates having a pyranose ring with an axial hydroxyl group on carbon 2. The polypeptide is Sodium/glucose cotransporter 4 (Slc5a9) (Mus musculus (Mouse)).